Here is a 404-residue protein sequence, read N- to C-terminus: Phosphopentomutase (404 aa).

Positions 10, 303, 308, 344, 345, and 356 each coordinate Mn(2+).

Belongs to the phosphopentomutase family. Requires Mn(2+) as cofactor.

Its subcellular location is the cytoplasm. The enzyme catalyses 2-deoxy-alpha-D-ribose 1-phosphate = 2-deoxy-D-ribose 5-phosphate. It carries out the reaction alpha-D-ribose 1-phosphate = D-ribose 5-phosphate. It functions in the pathway carbohydrate degradation; 2-deoxy-D-ribose 1-phosphate degradation; D-glyceraldehyde 3-phosphate and acetaldehyde from 2-deoxy-alpha-D-ribose 1-phosphate: step 1/2. In terms of biological role, isomerase that catalyzes the conversion of deoxy-ribose 1-phosphate (dRib-1-P) and ribose 1-phosphate (Rib-1-P) to deoxy-ribose 5-phosphate (dRib-5-P) and ribose 5-phosphate (Rib-5-P), respectively. This chain is Phosphopentomutase, found in Shewanella putrefaciens (strain CN-32 / ATCC BAA-453).